Here is a 132-residue protein sequence, read N- to C-terminus: Small ribosomal subunit protein uS8c (132 aa).

Belongs to the universal ribosomal protein uS8 family. In terms of assembly, part of the 30S ribosomal subunit.

It localises to the plastid. Its subcellular location is the chloroplast. In terms of biological role, one of the primary rRNA binding proteins, it binds directly to 16S rRNA central domain where it helps coordinate assembly of the platform of the 30S subunit. This is Small ribosomal subunit protein uS8c (rps8) from Marchantia polymorpha (Common liverwort).